A 130-amino-acid polypeptide reads, in one-letter code: UPF0102 protein BT_1882 (130 aa).

Belongs to the UPF0102 family.

The polypeptide is UPF0102 protein BT_1882 (Bartonella tribocorum (strain CIP 105476 / IBS 506)).